The following is a 262-amino-acid chain: Acyl-[acyl-carrier-protein]--UDP-N-acetylglucosamine O-acyltransferase (262 aa).

This sequence belongs to the transferase hexapeptide repeat family. LpxA subfamily. In terms of assembly, homotrimer.

The protein localises to the cytoplasm. It carries out the reaction a (3R)-hydroxyacyl-[ACP] + UDP-N-acetyl-alpha-D-glucosamine = a UDP-3-O-[(3R)-3-hydroxyacyl]-N-acetyl-alpha-D-glucosamine + holo-[ACP]. The protein operates within glycolipid biosynthesis; lipid IV(A) biosynthesis; lipid IV(A) from (3R)-3-hydroxytetradecanoyl-[acyl-carrier-protein] and UDP-N-acetyl-alpha-D-glucosamine: step 1/6. Its function is as follows. Involved in the biosynthesis of lipid A, a phosphorylated glycolipid that anchors the lipopolysaccharide to the outer membrane of the cell. This is Acyl-[acyl-carrier-protein]--UDP-N-acetylglucosamine O-acyltransferase from Pasteurella multocida (strain Pm70).